A 325-amino-acid chain; its full sequence is Pectinesterase A (325 aa).

The first 18 residues, 1-18, serve as a signal peptide directing secretion; that stretch reads MRVQSYLSLFSLVGAALC. Residue Asn-126 is glycosylated (N-linked (GlcNAc...) asparagine). Gln-143 is a binding site for substrate. The Proton donor role is filled by Asp-166. Asp-187 acts as the Nucleophile in catalysis. Substrate is bound by residues Arg-247 and Trp-249.

It belongs to the pectinesterase family.

The protein localises to the secreted. The catalysed reaction is [(1-&gt;4)-alpha-D-galacturonosyl methyl ester](n) + n H2O = [(1-&gt;4)-alpha-D-galacturonosyl](n) + n methanol + n H(+). The protein operates within glycan metabolism; pectin degradation; 2-dehydro-3-deoxy-D-gluconate from pectin: step 1/5. Involved in maceration and soft-rotting of plant tissue. Active against citrus pectin. The sequence is that of Pectinesterase A (pmeA) from Emericella nidulans (strain FGSC A4 / ATCC 38163 / CBS 112.46 / NRRL 194 / M139) (Aspergillus nidulans).